The following is a 217-amino-acid chain: 3,4-dihydroxy-2-butanone 4-phosphate synthase (217 aa).

D-ribulose 5-phosphate is bound by residues 37–38 (RE), aspartate 42, 150–154 (RGGHT), and glutamate 174. Mg(2+) is bound at residue glutamate 38. Histidine 153 is a binding site for Mg(2+).

Belongs to the DHBP synthase family. As to quaternary structure, homodimer. Mg(2+) serves as cofactor. It depends on Mn(2+) as a cofactor.

The catalysed reaction is D-ribulose 5-phosphate = (2S)-2-hydroxy-3-oxobutyl phosphate + formate + H(+). The protein operates within cofactor biosynthesis; riboflavin biosynthesis; 2-hydroxy-3-oxobutyl phosphate from D-ribulose 5-phosphate: step 1/1. Its function is as follows. Catalyzes the conversion of D-ribulose 5-phosphate to formate and 3,4-dihydroxy-2-butanone 4-phosphate. The chain is 3,4-dihydroxy-2-butanone 4-phosphate synthase from Salmonella heidelberg (strain SL476).